The primary structure comprises 765 residues: Carboxysome assembly protein CsoS2 (765 aa).

Positions 1–22 (MSTKTSREIALERRKAMSDGGK) are enriched in basic and acidic residues. 2 disordered regions span residues 1–107 (MSTK…RTDV) and 165–229 (REAQ…NKNG). The interval 1–215 (MSTKTSREIA…RSKTGSTSKQ (215 aa)) is N-terminal domain. The stretch at 7–22 (REIALERRKAMSDGGK) is one N-repeat 1 repeat. Polar residues predominate over residues 38–63 (SQDINSTGATSSNKKVLTSPSKSNIP). The segment covering 77–87 (SSKELGIERRK) has biased composition (basic and acidic residues). 3 N-repeat repeats span residues 79 to 94 (KELG…THGK), 158 to 173 (RDIV…KHGK), and 196 to 211 (REIS…KTGS). A compositionally biased stretch (basic and acidic residues) spans 187–207 (RRGDPDLSSREISQRVRELRS). The middle region stretch occupies residues 216–586 (GNGKCRPCGP…LSNCETPPND (371 aa)). M-repeat repeat units follow at residues 240 to 289 (KVGK…GQFC), 300 to 349 (RASV…KKYC), 358 to 397 (KVMQ…GDQY), 411 to 460 (KVGS…EKFC), 470 to 519 (KVGL…NDNC), and 530 to 580 (RATV…LSNC). Disordered regions lie at residues 306–328 (TTSG…GDEP) and 367–413 (GLKV…EKVG). A C-terminal domain region spans residues 589–734 (YANQEKSASN…AMPPVDNKRN (146 aa)). C-repeat repeat units follow at residues 604–648 (SVNS…GTEQ) and 677–711 (KKEP…EGVS). 2 disordered regions span residues 611 to 637 (EKYS…GPFD) and 656 to 765 (NMTY…GARG). Positions 730–741 (DNKRNDETEKPD) are enriched in basic and acidic residues. Positions 735-765 (DETEKPDFLITGSSGNTRDGQLVTFSGGARG) are C-terminal peptide.

Belongs to the CsoS2 family. As to quaternary structure, probably interacts with the carboxysome major shell protein CsoS1 via the N-terminal domain. A CsoS1-CsoS1D-CsoS2 complex can be isolated following expression in E.coli. Interacts via its N-terminal repeats with RuBisCO. Post-translationally, unlike H.neapolitanus and predictions for P.marinus strain MIT 9313, this protein is not thought to have ribosomal frameshifting.

It localises to the carboxysome. Its function is as follows. Required for alpha-carboxysome (Cb) assembly, mediates interaction between RuBisCO and the Cb shell. The protein is probably highly flexible. The C-terminal repeats act as the encapsulation signal to target proteins to the Cb; they are necessary and sufficient to target both CsoS2 and foreign proteins to the Cb. The N-terminal repeats of this protein bind simultaneously to both subunits of RuBisCO. Probably also interacts with the major shell proteins (CsoS1); that interaction would increase the local concentration of CsoS2 so that it can condense RuBisCO and full carboxysomes can be formed. There are estimated to be 163 CsoS2 proteins per carboxysome; unlike H.neapolitanus only 1 form is seen. This Prochlorococcus marinus subsp. pastoris (strain CCMP1986 / NIES-2087 / MED4) protein is Carboxysome assembly protein CsoS2.